Here is a 437-residue protein sequence, read N- to C-terminus: Trigger factor (437 aa).

In terms of domain architecture, PPIase FKBP-type spans 163–248; sequence GDRVIIDFEG…LNNVSEPTLP (86 aa).

It belongs to the FKBP-type PPIase family. Tig subfamily.

The protein localises to the cytoplasm. The catalysed reaction is [protein]-peptidylproline (omega=180) = [protein]-peptidylproline (omega=0). Its function is as follows. Involved in protein export. Acts as a chaperone by maintaining the newly synthesized protein in an open conformation. Functions as a peptidyl-prolyl cis-trans isomerase. The polypeptide is Trigger factor (Neisseria gonorrhoeae (strain NCCP11945)).